A 25-amino-acid chain; its full sequence is Caerin-2.5 (25 aa).

As to expression, expressed by the skin parotoid and/or rostral glands.

Its subcellular location is the secreted. Antibacterial peptide, that adopts an alpha helical conformation which can disrupt bacterial membranes. Each caerin displays a different antimicrobial specificity. The chain is Caerin-2.5 from Ranoidea gilleni (Centralian tree frog).